Reading from the N-terminus, the 162-residue chain is Meiosis-specific protein HED1 (162 aa).

A disordered region spans residues 67–124 (KNLSENTGGGSPNGGAYLDAKKGVREQDQYQGGPSKELDRLQPPPSMKKSPPRKKKSL). Residues 85–94 (DAKKGVREQD) are compositionally biased toward basic and acidic residues.

As to quaternary structure, interacts with RAD51.

It is found in the nucleus. The protein localises to the chromosome. Involved in regulation of meiotic recombination and repair of DNA damage. Inhibits RAD51-mediated recombination when the meiotic recombination machinery is impaired. The sequence is that of Meiosis-specific protein HED1 (HED1) from Saccharomyces cerevisiae (strain ATCC 204508 / S288c) (Baker's yeast).